Here is a 429-residue protein sequence, read N- to C-terminus: Protein ABERRANT PANICLE ORGANIZATION 1 (429 aa).

Positions 1 to 11 (MMNPRRLPPLP) are enriched in pro residues. The segment at 1–21 (MMNPRRLPPLPSSTSSASAAD) is disordered. One can recognise an F-box domain in the interval 25-71 (PRVWRRLPQPLVDRILACLPTPSFLRLRAACRRFYHLLFSSPFLHSH). 2 helical membrane passes run 72 to 92 (LLLS…GHLL) and 112 to 132 (VAGG…LAFL). Kelch repeat units lie at residues 229 to 277 (MAFA…ELGG), 284 to 339 (RVAL…AEGG), and 350 to 397 (YVVL…GAAG).

Part of a putative SCF (ASK/Cullin/F-box) ubiquitin ligase complex. Interacts with FL/APO2. As to expression, expressed in apical meristems and the lateral organ primordia throughout development. Expressed in seedlings, roots, leaves, shoot apical meristem (SAM), developing panicles, and, at lower levels, in developing seeds.

The protein localises to the membrane. It participates in protein modification; protein ubiquitination. Its function is as follows. Component of SCF(ASK-cullin-F-box) E3 ubiquitin ligase complexes, which may mediate the ubiquitination and subsequent proteasomal degradation of target proteins. Together with FL/APO2, involved in the temporal regulation of meristem identity during both vegetative and reproductive developments in an APO2-dependent manner. Promotes spikelet formation by suppressing the precocious conversion of inflorescence meristems to spikelet meristems, probably via a positive regulation of class-C floral homeotic genes, but not of class-B genes, and through the control of cell proliferation in meristems. Mediates culm development and strength/diameter enhancement at internodes. Required for the regulation of the plastochron, floral organ identity, and floral determinacy. Controls the number of primary rachis branches (PRBs). May trigger the formation of vascular bundle systems which, consequently, promote carbohydrate translocation to panicles. Involved in ozone-induced grain yield regulation. The protein is Protein ABERRANT PANICLE ORGANIZATION 1 of Oryza sativa subsp. japonica (Rice).